A 456-amino-acid chain; its full sequence is Adenylosuccinate lyase (456 aa).

N(6)-(1,2-dicarboxyethyl)-AMP-binding positions include 15 to 16, 90 to 92, and 122 to 123; these read RY, NHD, and TS. The Proton donor/acceptor role is filled by His-171. Gln-248 lines the N(6)-(1,2-dicarboxyethyl)-AMP pocket. Residue Ser-296 is the Proton donor/acceptor of the active site. Residues Ser-297, 302-304, Asn-310, Arg-336, and 341-345 contribute to the N(6)-(1,2-dicarboxyethyl)-AMP site; these read KVN and STVLR.

The protein belongs to the lyase 1 family. Adenylosuccinate lyase subfamily. In terms of assembly, homotetramer. Residues from neighboring subunits contribute catalytic and substrate-binding residues to each active site.

The catalysed reaction is N(6)-(1,2-dicarboxyethyl)-AMP = fumarate + AMP. The enzyme catalyses (2S)-2-[5-amino-1-(5-phospho-beta-D-ribosyl)imidazole-4-carboxamido]succinate = 5-amino-1-(5-phospho-beta-D-ribosyl)imidazole-4-carboxamide + fumarate. It functions in the pathway purine metabolism; AMP biosynthesis via de novo pathway; AMP from IMP: step 2/2. Its pathway is purine metabolism; IMP biosynthesis via de novo pathway; 5-amino-1-(5-phospho-D-ribosyl)imidazole-4-carboxamide from 5-amino-1-(5-phospho-D-ribosyl)imidazole-4-carboxylate: step 2/2. Its function is as follows. Catalyzes two reactions in de novo purine nucleotide biosynthesis. Catalyzes the breakdown of 5-aminoimidazole- (N-succinylocarboxamide) ribotide (SAICAR or 2-[5-amino-1-(5-phospho-beta-D-ribosyl)imidazole-4-carboxamido]succinate) to 5-aminoimidazole-4-carboxamide ribotide (AICAR or 5-amino-1-(5-phospho-beta-D-ribosyl)imidazole-4-carboxamide) and fumarate, and of adenylosuccinate (ADS or N(6)-(1,2-dicarboxyethyl)-AMP) to adenosine monophosphate (AMP) and fumarate. The sequence is that of Adenylosuccinate lyase (purB) from Pseudomonas aeruginosa (strain ATCC 15692 / DSM 22644 / CIP 104116 / JCM 14847 / LMG 12228 / 1C / PRS 101 / PAO1).